A 201-amino-acid polypeptide reads, in one-letter code: Superoxide dismutase [Mn] (201 aa).

Residues H27, H81, D163, and H167 each contribute to the Mn(2+) site.

The protein belongs to the iron/manganese superoxide dismutase family. Homodimer. Mn(2+) is required as a cofactor.

The protein resides in the secreted. It catalyses the reaction 2 superoxide + 2 H(+) = H2O2 + O2. Its function is as follows. Destroys superoxide anion radicals which are normally produced within the cells and which are toxic to biological systems. The chain is Superoxide dismutase [Mn] (sodA) from Streptococcus pyogenes serotype M3 (strain ATCC BAA-595 / MGAS315).